Consider the following 97-residue polypeptide: Aspartyl/glutamyl-tRNA(Asn/Gln) amidotransferase subunit C (97 aa).

Belongs to the GatC family. As to quaternary structure, heterotrimer of A, B and C subunits.

It catalyses the reaction L-glutamyl-tRNA(Gln) + L-glutamine + ATP + H2O = L-glutaminyl-tRNA(Gln) + L-glutamate + ADP + phosphate + H(+). The enzyme catalyses L-aspartyl-tRNA(Asn) + L-glutamine + ATP + H2O = L-asparaginyl-tRNA(Asn) + L-glutamate + ADP + phosphate + 2 H(+). Allows the formation of correctly charged Asn-tRNA(Asn) or Gln-tRNA(Gln) through the transamidation of misacylated Asp-tRNA(Asn) or Glu-tRNA(Gln) in organisms which lack either or both of asparaginyl-tRNA or glutaminyl-tRNA synthetases. The reaction takes place in the presence of glutamine and ATP through an activated phospho-Asp-tRNA(Asn) or phospho-Glu-tRNA(Gln). The polypeptide is Aspartyl/glutamyl-tRNA(Asn/Gln) amidotransferase subunit C (Prochlorococcus marinus (strain MIT 9215)).